The sequence spans 63 residues: Anionic peptide NDBP7 (63 aa).

The first 20 residues, 1-20 (MISRFCLLFLLVFVVSKIQA), serve as a signal peptide directing secretion.

The protein belongs to the non-disulfide-bridged peptide (NDBP) superfamily. Long chain multifunctional peptide (group 2) family. Expressed by the venom gland.

Its subcellular location is the secreted. This Lychas mucronatus (Chinese swimming scorpion) protein is Anionic peptide NDBP7.